We begin with the raw amino-acid sequence, 195 residues long: Dephospho-CoA kinase (195 aa).

One can recognise a DPCK domain in the interval 2-195; the sequence is IIGLTGGIGV…DIVDSLSLSS (194 aa). 10–15 contributes to the ATP binding site; that stretch reads GVGKSF.

The protein belongs to the CoaE family.

It localises to the cytoplasm. The enzyme catalyses 3'-dephospho-CoA + ATP = ADP + CoA + H(+). Its pathway is cofactor biosynthesis; coenzyme A biosynthesis; CoA from (R)-pantothenate: step 5/5. Catalyzes the phosphorylation of the 3'-hydroxyl group of dephosphocoenzyme A to form coenzyme A. In Wolbachia sp. subsp. Brugia malayi (strain TRS), this protein is Dephospho-CoA kinase.